Consider the following 268-residue polypeptide: 3-methyl-2-oxobutanoate hydroxymethyltransferase (268 aa).

Residues aspartate 44 and aspartate 83 each contribute to the Mg(2+) site. Residues 44–45 (DS), aspartate 83, and lysine 113 contribute to the 3-methyl-2-oxobutanoate site. Glutamate 115 lines the Mg(2+) pocket. Glutamate 183 serves as the catalytic Proton acceptor.

Belongs to the PanB family. In terms of assembly, homodecamer; pentamer of dimers. Requires Mg(2+) as cofactor.

It is found in the cytoplasm. It carries out the reaction 3-methyl-2-oxobutanoate + (6R)-5,10-methylene-5,6,7,8-tetrahydrofolate + H2O = 2-dehydropantoate + (6S)-5,6,7,8-tetrahydrofolate. Its pathway is cofactor biosynthesis; (R)-pantothenate biosynthesis; (R)-pantoate from 3-methyl-2-oxobutanoate: step 1/2. Functionally, catalyzes the reversible reaction in which hydroxymethyl group from 5,10-methylenetetrahydrofolate is transferred onto alpha-ketoisovalerate to form ketopantoate. This is 3-methyl-2-oxobutanoate hydroxymethyltransferase from Leptospira biflexa serovar Patoc (strain Patoc 1 / Ames).